Reading from the N-terminus, the 144-residue chain is MELNNIKPADGAKKDKRRVGRGIGSGLGKTAGRGHKGQKSRAGGFHKVGFEGGQMPMHRRLPKRGFVSLTKGDTARVRLSDLAGVGVAEIDLLVLKQAGVVSGAAKAAKVYLAGELGKAIKLSGVAVTKGARAAIEAAGGSVAE.

The segment at 1–57 (MELNNIKPADGAKKDKRRVGRGIGSGLGKTAGRGHKGQKSRAGGFHKVGFEGGQMPM) is disordered. Positions 21–31 (RGIGSGLGKTA) are enriched in gly residues.

The protein belongs to the universal ribosomal protein uL15 family. Part of the 50S ribosomal subunit.

Its function is as follows. Binds to the 23S rRNA. The polypeptide is Large ribosomal subunit protein uL15 (Thiobacillus denitrificans (strain ATCC 25259 / T1)).